Consider the following 91-residue polypeptide: DNA-binding protein HRL18 (91 aa).

This sequence belongs to the bacterial histone-like protein family.

Histone-like DNA-binding protein which is capable of wrapping DNA to stabilize it, and thus to prevent its denaturation under extreme environmental conditions. This Rhizobium leguminosarum protein is DNA-binding protein HRL18.